Reading from the N-terminus, the 501-residue chain is Dipeptide and tripeptide permease A (501 aa).

Over 1–34 (MSTANNKPTESVSLNAFKQPKSFYLIFSIELWER) the chain is Cytoplasmic. The helical transmembrane segment at 35–55 (FGYYGLQGIMAVYLVKQLGMS) threads the bilayer. Residues 56-59 (EADS) lie on the Periplasmic side of the membrane. The chain crosses the membrane as a helical span at residues 60–80 (ITLFSSFSALVYGLVAIGGWL). Topologically, residues 81–89 (GDKVLGTKR) are cytoplasmic. The helical transmembrane segment at 90–110 (VIMLGAIVLAIGYGLVAWSGH) threads the bilayer. Position 111 (Asp-111) is a topological domain, periplasmic. Residues 112–132 (VAIVYMGMATIAVGNGLFKAN) traverse the membrane as a helical segment. The Cytoplasmic portion of the chain corresponds to 133 to 153 (PSSLLSTCYAKDDPRLDGAFT). A helical membrane pass occupies residues 154 to 174 (MYYMSINIGSFFSMLATPWLA). Topologically, residues 175 to 178 (AKFG) are periplasmic. A helical transmembrane segment spans residues 179–199 (WSVAFALSFVGMLITVVNFLF). At 200 to 217 (CRSWVKDYGSKPDFEAVH) the chain is on the cytoplasmic side. A helical membrane pass occupies residues 218-238 (FGKLLATIAGVIVLIAIATWL). At 239-246 (LHNQGIAR) the chain is on the periplasmic side. A helical transmembrane segment spans residues 247 to 267 (MVLGVIALGIVIIFGKEAFAM). The Cytoplasmic segment spans residues 268 to 274 (QGAARRK). The chain crosses the membrane as a helical span at residues 275 to 295 (MIVAFILMLEAIIFFVLYSQM). The Periplasmic portion of the chain corresponds to 296 to 320 (PTSLNFFAIRNVEHTILGIAVEPEQ). A helical transmembrane segment spans residues 321 to 341 (YQALNPFWIIIGSPILAAIYN). The Cytoplasmic portion of the chain corresponds to 342–352 (KMGDTLPMPTK). A helical membrane pass occupies residues 353-373 (FAIGMVLCSGAFLVLPLGAKF). At 374-383 (ATDAGIVSVN) the chain is on the periplasmic side. The helical transmembrane segment at 384–404 (WLILSYGLQSIGELMISGLGL) threads the bilayer. The Cytoplasmic portion of the chain corresponds to 405–414 (AMVAQLVPQR). A helical transmembrane segment spans residues 415–435 (LMGFIMGSWFLTTAGANLIGG). Residues 436 to 459 (YVAGMMAVPENVTDPLMSLEVYGR) are Periplasmic-facing. Residues 460–480 (VFLQIGVATAVIAALMLITAP) traverse the membrane as a helical segment. Residues 481–501 (KLNRMTQDDEENAKAAKTATA) lie on the Cytoplasmic side of the membrane.

Belongs to the major facilitator superfamily. Proton-dependent oligopeptide transporter (POT/PTR) (TC 2.A.17) family. DtpA subfamily.

It is found in the cell inner membrane. In terms of biological role, proton-dependent permease that transports di- and tripeptides. This chain is Dipeptide and tripeptide permease A, found in Citrobacter koseri (strain ATCC BAA-895 / CDC 4225-83 / SGSC4696).